The sequence spans 867 residues: Cadherin-related family member 1 (867 aa).

Residues 1–21 (MKHEWNLCPSIFFSIFHICLS) form the signal peptide. At 22 to 707 (VQTNYGPYFF…SKDNPMKALG (686 aa)) the chain is on the extracellular side. Cadherin domains lie at 39 to 138 (NGNM…SPGF), 139 to 250 (LNTP…PPVF), 251 to 357 (VGTP…PPTF), 363 to 476 (PQNR…VPRF), 477 to 580 (SSEY…SPEF), and 572 to 692 (DIND…GPMA). The helical transmembrane segment at 708-728 (VLAGVMAIMVVITIFISTAMF) threads the bilayer. Residues 729–867 (WRNKKSNRVM…KNAGSSMSFY (139 aa)) lie on the Cytoplasmic side of the membrane. A disordered region spans residues 777-825 (EMESGPKNENRNNNYQGIPVPPRAPCPPPPPRLMPKVSKTERSLPTVSG). Residues 795 to 809 (PVPPRAPCPPPPPRL) are compositionally biased toward pro residues.

Expressed in photoreceptor cells of the outer nuclear layer of the retina and in the pinal gland.

It localises to the membrane. Functionally, potential calcium-dependent cell-adhesion protein. The polypeptide is Cadherin-related family member 1 (cdhr1) (Xenopus laevis (African clawed frog)).